The following is a 424-amino-acid chain: MAAEEGKDEAGLDQVEEEFSIWKRNTPFLYDLMISHPLEWPSLTLHWVPSTPIPYSKDPYFAVHKLILGTHTSGGAQDFLMVADVVIPTPDAEPGLGGRDQEPIVPKVEIKQKIRVDGEVNRARCMPQKPTLVGAKTSGSEVFLFDYARLSGKPQTSECDPDLRLMGHEQEGYGLAWSSFKEGYLLSGSQDQRICLWDVSATATDKVLNPMHVYEGHQSIIEDVAWHMKNENIFGSAGDDCQLVIWDLRTNQMQHQVKVHEREINYLSFNPFNEWVLATASSDSTVALFDLRKLTAPLHVLSKHEGEVFQVEWDPNHETVLASSGEDRRLMVWDINRVGDEQLEIELDAEDGPPELLFSHGGHKAKISDFAWNKDEPWVISSVAEDNSLQVWQMAESIYREDDEDEDDDDEGNQNAQHSNENQK.

Methionine 1 is subject to N-acetylmethionine. 5 WD repeats span residues 167-207 (GHEQ…TDKV), 216-256 (GHQS…MQHQ), 259-299 (VHER…APLH), 303-343 (KHEG…DEQL), and 362-402 (GHKA…YRED). A DWD box motif is present at residues 233 to 249 (IFGSAGDDCQLVIWDLR). Residues 394-424 (MAESIYREDDEDEDDDDEGNQNAQHSNENQK) are disordered. The span at 401-412 (EDDEDEDDDDEG) shows a compositional bias: acidic residues. Residues 413–424 (NQNAQHSNENQK) are compositionally biased toward polar residues.

This sequence belongs to the WD repeat RBAP46/RBAP48/MSI1 family.

The protein localises to the nucleus. In terms of biological role, core histone-binding subunit that may target chromatin assembly factors, chromatin remodeling factors and histone deacetylases to their histone substrates in a manner that is regulated by nucleosomal DNA. This is WD-40 repeat-containing protein MSI3 (MSI3) from Arabidopsis thaliana (Mouse-ear cress).